The chain runs to 150 residues: SsrA-binding protein (150 aa).

It belongs to the SmpB family.

Its subcellular location is the cytoplasm. In terms of biological role, required for rescue of stalled ribosomes mediated by trans-translation. Binds to transfer-messenger RNA (tmRNA), required for stable association of tmRNA with ribosomes. tmRNA and SmpB together mimic tRNA shape, replacing the anticodon stem-loop with SmpB. tmRNA is encoded by the ssrA gene; the 2 termini fold to resemble tRNA(Ala) and it encodes a 'tag peptide', a short internal open reading frame. During trans-translation Ala-aminoacylated tmRNA acts like a tRNA, entering the A-site of stalled ribosomes, displacing the stalled mRNA. The ribosome then switches to translate the ORF on the tmRNA; the nascent peptide is terminated with the 'tag peptide' encoded by the tmRNA and targeted for degradation. The ribosome is freed to recommence translation, which seems to be the essential function of trans-translation. This is SsrA-binding protein from Campylobacter curvus (strain 525.92).